The sequence spans 672 residues: tRNA(Met) cytidine acetyltransferase TmcA (672 aa).

ATP is bound by residues Gln-180, 202-211 (GRGKSALAGQ), and Arg-319. The 183-residue stretch at 349 to 531 (IEISAFYQQA…SGCYTAMALL (183 aa)) folds into the N-acetyltransferase domain. Acetyl-CoA contacts are provided by residues 461–463 (IAV), 468–474 (QREGIGQ), and Arg-506.

It belongs to the RNA cytidine acetyltransferase family. TmcA subfamily.

It is found in the cytoplasm. It catalyses the reaction cytidine(34) in elongator tRNA(Met) + acetyl-CoA + ATP + H2O = N(4)-acetylcytidine(34) in elongator tRNA(Met) + ADP + phosphate + CoA + H(+). In terms of biological role, catalyzes the formation of N(4)-acetylcytidine (ac(4)C) at the wobble position of tRNA(Met), by using acetyl-CoA as an acetyl donor and ATP (or GTP). This is tRNA(Met) cytidine acetyltransferase TmcA from Salmonella typhimurium (strain LT2 / SGSC1412 / ATCC 700720).